The following is a 289-amino-acid chain: Bifunctional aminodeoxychorismate lyase / D-amino acid transaminase (289 aa).

A pyridoxal 5'-phosphate-binding site is contributed by Arg-50. At Lys-149 the chain carries N6-(pyridoxal phosphate)lysine. Pyridoxal 5'-phosphate is bound by residues Tyr-153, Thr-216, and Thr-217. Position 252 (Ser-252) interacts with 2-oxoglutarate. Ser-253 lines the pyridoxal 5'-phosphate pocket. 2 residues coordinate 2-oxoglutarate: Met-254 and Thr-255.

Belongs to the class-IV pyridoxal-phosphate-dependent aminotransferase family. Homodimer. Pyridoxal 5'-phosphate serves as cofactor.

The enzyme catalyses 4-amino-4-deoxychorismate = 4-aminobenzoate + pyruvate + H(+). It carries out the reaction D-alanine + 2-oxoglutarate = D-glutamate + pyruvate. The protein operates within cofactor biosynthesis; tetrahydrofolate biosynthesis; 4-aminobenzoate from chorismate: step 2/2. Its pathway is cell wall biogenesis; peptidoglycan biosynthesis. In terms of biological role, bifunctional enzyme that catalyzes two enzymatic reactions in biochemically unrelated pathways: acts as an aminodeoxychorismate (ADC) lyase (ADCL) in folate biosynthesis, converting 4-amino-4-deoxychorismate (ADC) to 4-aminobenzoate (PABA), and as a D-amino acid transaminase (DAAT) in peptidoglycan (PG) biosynthesis. DAAT activity is strictly restricted to D-alanine and D-glutamate. May function as a metabolic toggle that alternates between ADCL and DAAT activity, prioritizing the former over the latter in response to substrate accumulation. Bifunctionality of this enzyme provides a failsafe mechanism for a metabolic coupling between nucleic acid and cell wall biosynthesis that appears to ensure prioritization of PABA production over D-alanine/D-glutamate biosynthesis. The chain is Bifunctional aminodeoxychorismate lyase / D-amino acid transaminase from Mycobacterium tuberculosis (strain ATCC 25618 / H37Rv).